The following is a 223-amino-acid chain: Ribose-5-phosphate isomerase A (223 aa).

Substrate contacts are provided by residues Thr-32–Thr-35, Asp-83–Asp-86, and Lys-96–Gly-99. Catalysis depends on Glu-105, which acts as the Proton acceptor. Lys-123 provides a ligand contact to substrate.

It belongs to the ribose 5-phosphate isomerase family. Homodimer.

It catalyses the reaction aldehydo-D-ribose 5-phosphate = D-ribulose 5-phosphate. It functions in the pathway carbohydrate degradation; pentose phosphate pathway; D-ribose 5-phosphate from D-ribulose 5-phosphate (non-oxidative stage): step 1/1. Functionally, catalyzes the reversible conversion of ribose-5-phosphate to ribulose 5-phosphate. The chain is Ribose-5-phosphate isomerase A from Acinetobacter baumannii (strain SDF).